We begin with the raw amino-acid sequence, 356 residues long: MRRELLLEKIEEYKAIMPWFVLDYYQSKLSVPYSFTTLYEYLKEYKRFFDWLIDSGISDAPRIADIKLDVLEHLTKKDMESFILYLRERPSLNTYSTKSGVSQTTINRTLSALSSLYKYLTEEVENDQGEPYFYRNVMKKVATKKKKETLASRAENIKQKLFLGDETMEFLDYVDCEYENKLSNRAKSSFQKNKERDLAIIALLLASGVRLSEAVNLDLKDVNLKMMVIEVTRKGGKRDSVNVASFAKPYLEHYLEIRQKRYKADKQDQAFFLTEYRGVPNRIDASSIEKMVGKYSQDFKIRVTPHKLRHTLATRLYDATKSQVLVSHQLGHASTQVTDLYTHIVNDEQKNALDKL.

In terms of domain architecture, Core-binding (CB) spans 16-121 (IMPWFVLDYY…ALSSLYKYLT (106 aa)). In terms of domain architecture, Tyr recombinase spans 169 to 354 (EFLDYVDCEY…VNDEQKNALD (186 aa)). Residues Arg-210, Lys-234, His-306, Arg-309, and His-332 contribute to the active site. Catalysis depends on Tyr-341, which acts as the O-(3'-phospho-DNA)-tyrosine intermediate.

The protein belongs to the 'phage' integrase family. XerS subfamily.

It is found in the cytoplasm. FtsK is required for recombination. In terms of biological role, site-specific tyrosine recombinase, which acts by catalyzing the cutting and rejoining of the recombining DNA molecules. Essential to convert dimers of the bacterial chromosome into monomers to permit their segregation at cell division. The sequence is that of Tyrosine recombinase XerS from Streptococcus uberis (strain ATCC BAA-854 / 0140J).